The chain runs to 238 residues: Ribonuclease PH (238 aa).

Phosphate is bound by residues Arg-86 and 124–126 (GTR).

This sequence belongs to the RNase PH family. In terms of assembly, homohexameric ring arranged as a trimer of dimers.

The catalysed reaction is tRNA(n+1) + phosphate = tRNA(n) + a ribonucleoside 5'-diphosphate. Phosphorolytic 3'-5' exoribonuclease that plays an important role in tRNA 3'-end maturation. Removes nucleotide residues following the 3'-CCA terminus of tRNAs; can also add nucleotides to the ends of RNA molecules by using nucleoside diphosphates as substrates, but this may not be physiologically important. Probably plays a role in initiation of 16S rRNA degradation (leading to ribosome degradation) during starvation. This is Ribonuclease PH from Haemophilus ducreyi (strain 35000HP / ATCC 700724).